A 455-amino-acid polypeptide reads, in one-letter code: Ribosomal protein uS12 methylthiotransferase RimO (455 aa).

Positions 21 to 131 (GKVGFISLGC…VVGAVHQYVP (111 aa)) constitute an MTTase N-terminal domain. [4Fe-4S] cluster is bound by residues C30, C66, C95, C164, C168, and C171. One can recognise a Radical SAM core domain in the interval 150–387 (LTPRHYAYLK…MAKQAEISAA (238 aa)). The TRAM domain occupies 390-455 (QAKIGRTIDV…DEHDLWARLI (66 aa)).

Belongs to the methylthiotransferase family. RimO subfamily. [4Fe-4S] cluster serves as cofactor.

Its subcellular location is the cytoplasm. The enzyme catalyses L-aspartate(89)-[ribosomal protein uS12]-hydrogen + (sulfur carrier)-SH + AH2 + 2 S-adenosyl-L-methionine = 3-methylsulfanyl-L-aspartate(89)-[ribosomal protein uS12]-hydrogen + (sulfur carrier)-H + 5'-deoxyadenosine + L-methionine + A + S-adenosyl-L-homocysteine + 2 H(+). Functionally, catalyzes the methylthiolation of an aspartic acid residue of ribosomal protein uS12. This is Ribosomal protein uS12 methylthiotransferase RimO from Marinobacter nauticus (strain ATCC 700491 / DSM 11845 / VT8) (Marinobacter aquaeolei).